Consider the following 553-residue polypeptide: Solute carrier family 22 member 12 (553 aa).

Residues 16 to 36 (FQLLQAVALVTPILWVTTQNM) traverse the membrane as a helical segment. N-linked (GlcNAc...) asparagine glycosylation is found at N56, N102, and N107. 11 consecutive transmembrane segments (helical) span residues 146–166 (PMAQ…CGHA), 182–202 (LVSV…YCLF), 204–224 (FLVA…LMEW), 232–252 (LMMT…GSVA), 260–280 (MLQL…WWLP), 351–371 (FISM…ALDL), 378–398 (IFLL…GSLL), 407–427 (LCQA…ILVP), 435–455 (SSLA…VTIF), 466–486 (MTAV…GPLV), and 495–515 (WLPL…ALLL). S534 is subject to Phosphoserine.

Belongs to the major facilitator (TC 2.A.1) superfamily. Organic cation transporter (TC 2.A.1.19) family. In terms of assembly, interacts with PDZK1. Post-translationally, N-glycosylated. In terms of tissue distribution, expressed in the proximal tubular epithelial cells in kidney.

The protein resides in the apical cell membrane. The catalysed reaction is urate(out) + (S)-lactate(in) = urate(in) + (S)-lactate(out). The enzyme catalyses nicotinate(in) + urate(out) = nicotinate(out) + urate(in). It carries out the reaction urate(out) + n chloride(in) = urate(in) + n chloride(out). It catalyses the reaction orotate(out) + nicotinate(in) = orotate(in) + nicotinate(out). In terms of biological role, electroneutral antiporter that translocates urate across the apical membrane of proximal tubular cells in exchange for monovalent organic or inorganic anions. Involved in renal reabsorption of urate and helps maintaining blood levels of uric acid. Mediates urate uptake by an exchange with organic anions such as (S)-lactate and nicotinate, and inorganic anion Cl(-). Other inorganic anions such as Br(-), I(-) and NO3(-) may also act as counteranions that exchange for urate. Also mediates orotate tubular uptake coupled with nicotinate efflux and to a lesser extent with lactate efflux, therefore displaying a potential role in orotate renal reabsorption. Orotate transport is Cl(-)-dependent. This Rattus norvegicus (Rat) protein is Solute carrier family 22 member 12 (Slc22a12).